Reading from the N-terminus, the 519-residue chain is T-complex protein 11-like protein 2 (519 aa).

The disordered stretch occupies residues M1–L30. Position 16 is a phosphoserine (S16). Low complexity predominate over residues D17–S29.

The protein belongs to the TCP11 family. Interacts with FMNL2; this interaction promotes muscle-derived satellite cell (MDSC) migration and differentiation.

The protein resides in the cytoplasm. The protein localises to the cytoskeleton. Functionally, promotes the migration of muscle-derived satellite cells (MDSCs) during differentiation throught interaction with FMNL2 and therefore may participate in microfilament assembly. The polypeptide is T-complex protein 11-like protein 2 (Homo sapiens (Human)).